Consider the following 645-residue polypeptide: Phosphomethylpyrimidine synthase (645 aa).

Residues 1-12 (MSHNTVIPTTDI) show a composition bias toward polar residues. Residues 1 to 25 (MSHNTVIPTTDISPKPDPARPRKAQ) are disordered. Substrate-binding positions include Asn253, Met282, Tyr311, His347, 367-369 (SRG), 408-411 (DGLR), and Glu447. His451 provides a ligand contact to Zn(2+). Tyr474 contacts substrate. His515 is a binding site for Zn(2+). The [4Fe-4S] cluster site is built by Cys595, Cys598, and Cys603.

The protein belongs to the ThiC family. In terms of assembly, homodimer. The cofactor is [4Fe-4S] cluster.

The catalysed reaction is 5-amino-1-(5-phospho-beta-D-ribosyl)imidazole + S-adenosyl-L-methionine = 4-amino-2-methyl-5-(phosphooxymethyl)pyrimidine + CO + 5'-deoxyadenosine + formate + L-methionine + 3 H(+). Its pathway is cofactor biosynthesis; thiamine diphosphate biosynthesis. Functionally, catalyzes the synthesis of the hydroxymethylpyrimidine phosphate (HMP-P) moiety of thiamine from aminoimidazole ribotide (AIR) in a radical S-adenosyl-L-methionine (SAM)-dependent reaction. This chain is Phosphomethylpyrimidine synthase, found in Photorhabdus laumondii subsp. laumondii (strain DSM 15139 / CIP 105565 / TT01) (Photorhabdus luminescens subsp. laumondii).